The chain runs to 219 residues: Inner membrane protein YghB (219 aa).

The Cytoplasmic segment spans residues Met-1–Ala-17. Residues Ala-18–Leu-38 traverse the membrane as a helical segment. At Glu-39 to Asp-67 the chain is on the periplasmic side. Residues Phe-68–Ile-88 form a helical membrane-spanning segment. The Cytoplasmic segment spans residues Gln-89–Ser-160. Residues Gly-161 to Val-181 form a helical membrane-spanning segment. Residues Lys-182–Phe-191 lie on the Periplasmic side of the membrane. A helical transmembrane segment spans residues Leu-192–Ile-212. Residues Lys-213–Ala-219 lie on the Cytoplasmic side of the membrane.

It belongs to the DedA family.

The protein localises to the cell inner membrane. The sequence is that of Inner membrane protein YghB (yghB) from Escherichia coli O6:H1 (strain CFT073 / ATCC 700928 / UPEC).